A 247-amino-acid polypeptide reads, in one-letter code: Probable transcriptional regulatory protein BHWA1_01533 (247 aa).

Residues 1–22 form a disordered region; that stretch reads MSGHSKWASIKHKKAANDSKKG.

The protein belongs to the TACO1 family.

The protein localises to the cytoplasm. The sequence is that of Probable transcriptional regulatory protein BHWA1_01533 from Brachyspira hyodysenteriae (strain ATCC 49526 / WA1).